The primary structure comprises 118 residues: Small ribosomal subunit protein uS13 (118 aa).

Residues 94–118 (GLPVRGQRTKTNARTRKGPRKPIKK) form a disordered region.

The protein belongs to the universal ribosomal protein uS13 family. In terms of assembly, part of the 30S ribosomal subunit. Forms a loose heterodimer with protein S19. Forms two bridges to the 50S subunit in the 70S ribosome.

Its function is as follows. Located at the top of the head of the 30S subunit, it contacts several helices of the 16S rRNA. In the 70S ribosome it contacts the 23S rRNA (bridge B1a) and protein L5 of the 50S subunit (bridge B1b), connecting the 2 subunits; these bridges are implicated in subunit movement. Contacts the tRNAs in the A and P-sites. The polypeptide is Small ribosomal subunit protein uS13 (Pasteurella multocida (strain Pm70)).